We begin with the raw amino-acid sequence, 63 residues long: Large ribosomal subunit protein uL29 (63 aa).

The protein belongs to the universal ribosomal protein uL29 family.

This chain is Large ribosomal subunit protein uL29, found in Histophilus somni (strain 129Pt) (Haemophilus somnus).